We begin with the raw amino-acid sequence, 126 residues long: DNA-directed RNA polymerase I subunit RPA12 (126 aa).

The Zn(2+) site is built by cysteine 20, cysteine 23, cysteine 38, cysteine 41, cysteine 87, and cysteine 90. The C4-type zinc-finger motif lies at 20–41; it reads CSDCGSVLPLPGAQDTVTCIRC. The segment at 83 to 123 adopts a TFIIS-type zinc-finger fold; that stretch reads VDRRCPRCGHEGMAYHTRQMRSADEGQTVFYTCTNCKFQEK. Residues 106-107 carry the Hairpin motif; that stretch reads DE. The Zn(2+) site is built by cysteine 115 and cysteine 118.

This sequence belongs to the archaeal RpoM/eukaryotic RPA12/RPB9/RPC11 RNA polymerase family. As to quaternary structure, component of the RNA polymerase I (Pol I) complex consisting of 13 subunits: a ten-subunit catalytic core composed of POLR1A/RPA1, POLR1B/RPA2, POLR1C/RPAC1, POLR1D/RPAC2, POLR1H/RPA12, POLR2E/RPABC1, POLR2F/RPABC2, POLR2H/RPABC3, POLR2K/RPABC4 and POLR2L/RPABC5; a mobile stalk subunit POLR1F/RPA43 protruding from the core and additional subunits homologous to general transcription factors POLR1E/RPA49 and POLR1G/RPA34. Part of Pol I pre-initiation complex (PIC), in which Pol I core assembles with RRN3 and promoter-bound UTBF and SL1/TIF-IB complex.

Its subcellular location is the nucleus. The protein localises to the nucleolus. Its function is as follows. Core component of RNA polymerase I (Pol I), a DNA-dependent RNA polymerase which synthesizes ribosomal RNA precursors using the four ribonucleoside triphosphates as substrates. Can mediate Pol I proofreading of the nascent RNA transcript. Anchors into the Pol I active site to monitor transcription fidelity and cleave mis-incorporated 5'-ribonucleotides. This is DNA-directed RNA polymerase I subunit RPA12 from Homo sapiens (Human).